Consider the following 799-residue polypeptide: RasGAP-activating-like protein 1 (799 aa).

2 consecutive C2 domains span residues 1–105 (MAKS…DSWI) and 116–231 (VQGE…NGWF). Ca(2+)-binding residues include Asp-21, Asp-27, Asp-74, Asp-76, Asp-82, Asp-149, Asp-155, Asp-202, Asp-204, and Asp-210. In terms of domain architecture, Ras-GAP spans 316–544 (GLAGPFLDYL…SRVRDFLDQL (229 aa)). Thr-400 carries the post-translational modification Phosphothreonine. The region spanning 565–672 (TIVREGFLLK…WLSALRKASA (108 aa)) is the PH domain. A Btk-type zinc finger spans residues 674–710 (NPGKLVACHPGAFRSGRWTCCLQAERSAAGCSRTHSA). Zn(2+)-binding residues include His-682, Cys-693, Cys-694, and Cys-704.

It depends on Ca(2+) as a cofactor.

Functionally, probable inhibitory regulator of the Ras-cyclic AMP pathway. Plays a role in dendrite formation by melanocytes. The protein is RasGAP-activating-like protein 1 of Mus musculus (Mouse).